The sequence spans 228 residues: MYKRPGHKHLSISIIMDTNTPSVLTVLASWGWNCASSSPATQCLERSTQGCLREGPSAQGCDYCEPVNVENGPPTTFVKNQDHAKNQEYTHFDTLFMVSSIDELGRRQLTDTIRRDLRHSLAKFTIACTKTSSFSSSYATRKGRKKKGPRTQPSNKSLQMFILCRRAHAKHIRAQLQAVIQARKPRKYYTRAIDGSTHPVVPVFVYEFAAIDTVSLHRDNVIVDSSGS.

Belongs to the alphaherpesvirinae HHV-1 UL3 family. Phosphorylated.

The protein resides in the host nucleus. The chain is Nuclear phosphoprotein UL3 homolog (MDV015) from Gallus gallus (Chicken).